The primary structure comprises 258 residues: Small ribosomal subunit protein uS2 (258 aa).

Belongs to the universal ribosomal protein uS2 family.

This is Small ribosomal subunit protein uS2 from Leuconostoc mesenteroides subsp. mesenteroides (strain ATCC 8293 / DSM 20343 / BCRC 11652 / CCM 1803 / JCM 6124 / NCDO 523 / NBRC 100496 / NCIMB 8023 / NCTC 12954 / NRRL B-1118 / 37Y).